The primary structure comprises 304 residues: Nod factor export ATP-binding protein I (304 aa).

Residues 6 to 236 (IDLAGVKKSF…HIGCQVIEIF (231 aa)) enclose the ABC transporter domain. Residue 38-45 (GPNGAGKS) coordinates ATP.

This sequence belongs to the ABC transporter superfamily. Lipooligosaccharide exporter (TC 3.A.1.102) family. As to quaternary structure, the complex is composed of two ATP-binding proteins (NodI) and two transmembrane proteins (NodJ).

The protein localises to the cell inner membrane. Functionally, part of the ABC transporter complex NodIJ involved in the export of the nodulation factors (Nod factors), the bacterial signal molecules that induce symbiosis and subsequent nodulation induction. Nod factors are LCO (lipo-chitin oligosaccharide), a modified beta-1,4-linked N-acetylglucosamine oligosaccharide. This subunit is responsible for energy coupling to the transport system. The sequence is that of Nod factor export ATP-binding protein I from Rhizobium sp. (strain N33).